The sequence spans 211 residues: FMN-dependent NADH:quinone oxidoreductase 3 (211 aa).

An FMN-binding site is contributed by 102-105 (MWNF).

It belongs to the azoreductase type 1 family. As to quaternary structure, homodimer. It depends on FMN as a cofactor.

The catalysed reaction is 2 a quinone + NADH + H(+) = 2 a 1,4-benzosemiquinone + NAD(+). The enzyme catalyses N,N-dimethyl-1,4-phenylenediamine + anthranilate + 2 NAD(+) = 2-(4-dimethylaminophenyl)diazenylbenzoate + 2 NADH + 2 H(+). In terms of biological role, quinone reductase that provides resistance to thiol-specific stress caused by electrophilic quinones. Its function is as follows. Also exhibits azoreductase activity. Catalyzes the reductive cleavage of the azo bond in aromatic azo compounds to the corresponding amines. This Bacillus anthracis protein is FMN-dependent NADH:quinone oxidoreductase 3.